The chain runs to 359 residues: Guanine nucleotide-binding protein alpha-4 subunit (359 aa).

Glycine 2 carries N-myristoyl glycine lipidation. Residue cysteine 3 is the site of S-palmitoyl cysteine attachment. Positions 31–359 (GEIKLLLLGA…RNNLYLCGLY (329 aa)) constitute a G-alpha domain. Residues 34-47 (KLLLLGAGESGKST) are G1 motif. GTP contacts are provided by residues 39-46 (GAGESGKS), 178-184 (LRARVKS), 203-207 (DVGGQ), 272-275 (NKMD), and alanine 331. A Mg(2+)-binding site is contributed by serine 46. A G2 motif region spans residues 176–184 (DILRARVKS). The interval 199 to 208 (FKMFDVGGQR) is G3 motif. The interval 268 to 275 (ILFLNKMD) is G4 motif. The G5 motif stretch occupies residues 329–334 (TCATDT).

This sequence belongs to the G-alpha family. G(i/o/t/z) subfamily. As to quaternary structure, g proteins are composed of 3 units; alpha, beta and gamma. The alpha chain contains the guanine nucleotide binding site. In terms of tissue distribution, expressed in ASI neurons.

In terms of biological role, guanine nucleotide-binding proteins (G proteins) are involved as modulators or transducers in various transmembrane signaling systems. Acts in concert with npr-15 to activate TGF-beta-like daf-7 secretion in the ASI neuron, thereby promoting larval development and inhibition of dauer diapause. In Caenorhabditis elegans, this protein is Guanine nucleotide-binding protein alpha-4 subunit (gpa-4).